The primary structure comprises 459 residues: Pentatricopeptide repeat-containing protein At1g07740, mitochondrial (459 aa).

Residues 1–20 constitute a mitochondrion transit peptide; sequence MRRRLSSVLINNQCIASQRH. The tract at residues 19-41 is disordered; the sequence is RHYHTSRPEKPTKKASSHEPTHK. A compositionally biased stretch (basic and acidic residues) spans 24–41; the sequence is SRPEKPTKKASSHEPTHK. PPR repeat units lie at residues 80 to 114, 115 to 149, 150 to 184, 185 to 219, 220 to 254, 255 to 289, 290 to 324, 325 to 359, 360 to 394, and 395 to 429; these read DYPS…NVRC, RESL…DCVR, TIQS…RLRP, NSVS…EVQP, SVVT…RIRP, NAVT…GCKP, GLVN…RIKP, DVVI…GCKP, NAAT…RHCP, and TPAT…NLSF.

The protein belongs to the PPR family. P subfamily.

It localises to the mitochondrion. The sequence is that of Pentatricopeptide repeat-containing protein At1g07740, mitochondrial from Arabidopsis thaliana (Mouse-ear cress).